The following is a 388-amino-acid chain: Outer membrane protein assembly factor BamB (388 aa).

Positions 1–21 (MILGWTQRIFTLLVVVTLLAA) are cleaved as a signal peptide. Residue cysteine 22 is the site of N-palmitoyl cysteine attachment. Cysteine 22 carries the S-diacylglycerol cysteine lipid modification.

It belongs to the BamB family. In terms of assembly, part of the Bam complex.

It is found in the cell outer membrane. Functionally, part of the outer membrane protein assembly complex, which is involved in assembly and insertion of beta-barrel proteins into the outer membrane. In Kangiella koreensis (strain DSM 16069 / JCM 12317 / KCTC 12182 / SW-125), this protein is Outer membrane protein assembly factor BamB.